The primary structure comprises 214 residues: Superoxide dismutase [Mn/Fe] (214 aa).

4 residues coordinate Fe(3+): His-31, His-79, Asp-165, and His-169. His-31, His-79, Asp-165, and His-169 together coordinate Mn(2+).

Belongs to the iron/manganese superoxide dismutase family. Mn(2+) serves as cofactor. It depends on Fe(3+) as a cofactor.

The enzyme catalyses 2 superoxide + 2 H(+) = H2O2 + O2. Destroys superoxide anion radicals which are normally produced within the cells and which are toxic to biological systems. Catalyzes the dismutation of superoxide anion radicals into O2 and H2O2 by successive reduction and oxidation of the transition metal ion at the active site. This chain is Superoxide dismutase [Mn/Fe] (sod), found in Aeropyrum pernix (strain ATCC 700893 / DSM 11879 / JCM 9820 / NBRC 100138 / K1).